The sequence spans 276 residues: Putative translation initiation factor eIF-2B subunit 2-like (276 aa).

The protein belongs to the eIF-2B alpha/beta/delta subunits family. In terms of assembly, complex of two different subunits.

Functionally, catalyzes the exchange of initiation factor 2-bound GDP for GTP. In Pyrococcus horikoshii (strain ATCC 700860 / DSM 12428 / JCM 9974 / NBRC 100139 / OT-3), this protein is Putative translation initiation factor eIF-2B subunit 2-like.